The chain runs to 451 residues: MASPSNHSASSLTAEPSGALLGSITVPGDKSISHRALIFGALAVGETRIGGLLEGEDVLATAETMRRLGAEVERHADGTWSVHGVGVGGLKEPDQPLDFGNSGTGARLVMGLVAGHPITATFIGDASLSRRPMGRVIAPLTETGATFHAREGGRLPLTLTGAGRALPITYRLPVASAQVKSAVLLAGLNAPGVTTVIEETPTRDHTERMLRAFGAHIEVEDGPRGLIVIRLTGEPELKPCRISVPGDPSSAAFPVVAALLTPGSEITVTGITLNPHRAGLYTTLMEMGGDIEVMNQREEGGEPVADLRVRASRLKGIEVPPARAASMIDEYPVLAIAAAFAEGETRMLGIHELRVKESDRIAATASGLRANGVKVHESDDGMVVEGRSGEVGGGGHVATHIDHRIAMSFLVMGLAAQKPVTVDDAAMIATSFPNFTGLMRGLGASFVGRAQ.

The 3-phosphoshikimate site is built by lysine 30, serine 31, and arginine 35. Lysine 30 provides a ligand contact to phosphoenolpyruvate. Positions 103 and 131 each coordinate phosphoenolpyruvate. 3-phosphoshikimate-binding residues include serine 176, glutamine 178, aspartate 329, and lysine 356. Position 178 (glutamine 178) interacts with phosphoenolpyruvate. The active-site Proton acceptor is aspartate 329. The phosphoenolpyruvate site is built by arginine 360 and arginine 404.

It belongs to the EPSP synthase family. Monomer.

The protein resides in the cytoplasm. The enzyme catalyses 3-phosphoshikimate + phosphoenolpyruvate = 5-O-(1-carboxyvinyl)-3-phosphoshikimate + phosphate. Its pathway is metabolic intermediate biosynthesis; chorismate biosynthesis; chorismate from D-erythrose 4-phosphate and phosphoenolpyruvate: step 6/7. Functionally, catalyzes the transfer of the enolpyruvyl moiety of phosphoenolpyruvate (PEP) to the 5-hydroxyl of shikimate-3-phosphate (S3P) to produce enolpyruvyl shikimate-3-phosphate and inorganic phosphate. In Parvibaculum lavamentivorans (strain DS-1 / DSM 13023 / NCIMB 13966), this protein is 3-phosphoshikimate 1-carboxyvinyltransferase.